Consider the following 308-residue polypeptide: Glutaminase (308 aa).

Positions 66, 117, 161, 168, 192, 244, and 262 each coordinate substrate.

This sequence belongs to the glutaminase family. Homotetramer.

It catalyses the reaction L-glutamine + H2O = L-glutamate + NH4(+). This Enterobacter sp. (strain 638) protein is Glutaminase.